The primary structure comprises 173 residues: Nucleoside-triphosphatase THEP1 (173 aa).

ATP-binding positions include 9-16 and 97-104; these read GPPGVGKT and LYVIDEVG.

The protein belongs to the THEP1 NTPase family.

The catalysed reaction is a ribonucleoside 5'-triphosphate + H2O = a ribonucleoside 5'-diphosphate + phosphate + H(+). Functionally, has nucleotide phosphatase activity towards ATP, GTP, CTP, TTP and UTP. May hydrolyze nucleoside diphosphates with lower efficiency. The protein is Nucleoside-triphosphatase THEP1 of Caldivirga maquilingensis (strain ATCC 700844 / DSM 13496 / JCM 10307 / IC-167).